The primary structure comprises 328 residues: Biotin synthase (328 aa).

One can recognise a Radical SAM core domain in the interval 48-275 (NRIQLSKLLN…KSHVRLTAGR (228 aa)). [4Fe-4S] cluster is bound by residues Cys-63, Cys-67, and Cys-70. [2Fe-2S] cluster is bound by residues Cys-107, Cys-138, Cys-198, and Arg-270.

This sequence belongs to the radical SAM superfamily. Biotin synthase family. As to quaternary structure, homodimer. The cofactor is [4Fe-4S] cluster. It depends on [2Fe-2S] cluster as a cofactor.

It carries out the reaction (4R,5S)-dethiobiotin + (sulfur carrier)-SH + 2 reduced [2Fe-2S]-[ferredoxin] + 2 S-adenosyl-L-methionine = (sulfur carrier)-H + biotin + 2 5'-deoxyadenosine + 2 L-methionine + 2 oxidized [2Fe-2S]-[ferredoxin]. Its pathway is cofactor biosynthesis; biotin biosynthesis; biotin from 7,8-diaminononanoate: step 2/2. Catalyzes the conversion of dethiobiotin (DTB) to biotin by the insertion of a sulfur atom into dethiobiotin via a radical-based mechanism. This chain is Biotin synthase, found in Brucella ovis (strain ATCC 25840 / 63/290 / NCTC 10512).